A 742-amino-acid chain; its full sequence is 5-methyltetrahydropteroyltriglutamate--homocysteine methyltransferase (742 aa).

5-methyltetrahydropteroyltri-L-glutamate contacts are provided by residues 18-21 (REWK) and Lys-112. L-homocysteine contacts are provided by residues 420-422 (IGS) and Glu-473. Residues 420 to 422 (IGS) and Glu-473 each bind L-methionine. A 5-methyltetrahydropteroyltri-L-glutamate-binding site is contributed by Trp-550. Asp-588 serves as a coordination point for L-homocysteine. L-methionine is bound at residue Asp-588. Residue Glu-594 participates in 5-methyltetrahydropteroyltri-L-glutamate binding. Positions 630, 632, and 654 each coordinate Zn(2+). His-683 (proton donor) is an active-site residue. Cys-715 is a Zn(2+) binding site.

The protein belongs to the vitamin-B12 independent methionine synthase family. Zn(2+) serves as cofactor.

The enzyme catalyses 5-methyltetrahydropteroyltri-L-glutamate + L-homocysteine = tetrahydropteroyltri-L-glutamate + L-methionine. It functions in the pathway amino-acid biosynthesis; L-methionine biosynthesis via de novo pathway; L-methionine from L-homocysteine (MetE route): step 1/1. Catalyzes the transfer of a methyl group from 5-methyltetrahydrofolate to homocysteine resulting in methionine formation. In Staphylococcus aureus (strain bovine RF122 / ET3-1), this protein is 5-methyltetrahydropteroyltriglutamate--homocysteine methyltransferase.